The chain runs to 378 residues: Deoxyguanosinetriphosphate triphosphohydrolase-like protein (378 aa).

The interval 1–28 is disordered; it reads MLAPYACQPGESRGRQQPESMSTFRSPF. The segment covering 15–26 has biased composition (polar residues); sequence RQQPESMSTFRS. An HD domain is found at 62 to 198; that stretch reads RLTHSIEVAQ…AAIADDVAYS (137 aa).

This sequence belongs to the dGTPase family. Type 2 subfamily.

The protein is Deoxyguanosinetriphosphate triphosphohydrolase-like protein of Cereibacter sphaeroides (strain ATCC 17025 / ATH 2.4.3) (Rhodobacter sphaeroides).